Here is a 704-residue protein sequence, read N- to C-terminus: Polyribonucleotide nucleotidyltransferase (704 aa).

D486 and D492 together coordinate Mg(2+). The KH domain maps to 553 to 612 (PRIYTMKINPEKIKDVIGKGGSVIRALTDETGTTIEIEDDGTIKIAATDGDKAKHAIRRI). The S1 motif domain occupies 622 to 690 (GRIYAGKVTR…RQGRIRLSIK (69 aa)).

The protein belongs to the polyribonucleotide nucleotidyltransferase family. In terms of assembly, component of the RNA degradosome, which is a multiprotein complex involved in RNA processing and mRNA degradation. It depends on Mg(2+) as a cofactor.

The protein resides in the cytoplasm. The catalysed reaction is RNA(n+1) + phosphate = RNA(n) + a ribonucleoside 5'-diphosphate. In terms of biological role, involved in mRNA degradation. Catalyzes the phosphorolysis of single-stranded polyribonucleotides processively in the 3'- to 5'-direction. This chain is Polyribonucleotide nucleotidyltransferase, found in Yersinia pseudotuberculosis serotype IB (strain PB1/+).